We begin with the raw amino-acid sequence, 199 residues long: 5'-deoxynucleotidase HDDC2 (199 aa).

Ala-2 carries the post-translational modification N-acetylalanine. The residue at position 5 (Ser-5) is a Phosphoserine. One can recognise an HD domain in the interval 41 to 143 (VSDHMYRMAV…VKQLDQCEMI (103 aa)). A divalent metal cation contacts are provided by His-44, His-72, Asp-73, Glu-76, Asp-81, Ile-82, and Asp-138. Ser-199 is modified (phosphoserine).

This sequence belongs to the HDDC2 family. Homodimer. Requires Mn(2+) as cofactor. The cofactor is Co(2+). It depends on Mg(2+) as a cofactor.

The enzyme catalyses a 2'-deoxyribonucleoside 5'-phosphate + H2O = a 2'-deoxyribonucleoside + phosphate. Catalyzes the dephosphorylation of the nucleoside 5'-monophosphates deoxyadenosine monophosphate (dAMP), deoxycytidine monophosphate (dCMP), deoxyguanosine monophosphate (dGMP) and deoxythymidine monophosphate (dTMP). The chain is 5'-deoxynucleotidase HDDC2 (Hddc2) from Mus musculus (Mouse).